Consider the following 509-residue polypeptide: 2-succinyl-5-enolpyruvyl-6-hydroxy-3-cyclohexene-1-carboxylate synthase (509 aa).

The protein belongs to the TPP enzyme family. MenD subfamily. As to quaternary structure, homodimer. The cofactor is Mg(2+). Requires Mn(2+) as cofactor. Thiamine diphosphate is required as a cofactor.

It catalyses the reaction isochorismate + 2-oxoglutarate + H(+) = 5-enolpyruvoyl-6-hydroxy-2-succinyl-cyclohex-3-ene-1-carboxylate + CO2. It participates in quinol/quinone metabolism; 1,4-dihydroxy-2-naphthoate biosynthesis; 1,4-dihydroxy-2-naphthoate from chorismate: step 2/7. Its pathway is quinol/quinone metabolism; menaquinone biosynthesis. Functionally, catalyzes the thiamine diphosphate-dependent decarboxylation of 2-oxoglutarate and the subsequent addition of the resulting succinic semialdehyde-thiamine pyrophosphate anion to isochorismate to yield 2-succinyl-5-enolpyruvyl-6-hydroxy-3-cyclohexene-1-carboxylate (SEPHCHC). This chain is 2-succinyl-5-enolpyruvyl-6-hydroxy-3-cyclohexene-1-carboxylate synthase, found in Corynebacterium diphtheriae (strain ATCC 700971 / NCTC 13129 / Biotype gravis).